The chain runs to 167 residues: Urease accessory protein UreE (167 aa).

This sequence belongs to the UreE family.

The protein localises to the cytoplasm. Its function is as follows. Involved in urease metallocenter assembly. Binds nickel. Probably functions as a nickel donor during metallocenter assembly. This is Urease accessory protein UreE from Pseudomonas aeruginosa (strain UCBPP-PA14).